Here is a 128-residue protein sequence, read N- to C-terminus: 3-aminoacrylate deaminase RutC (128 aa).

This sequence belongs to the RutC family. In terms of assembly, homotrimer.

It catalyses the reaction (Z)-3-aminoacrylate + H2O + H(+) = 3-oxopropanoate + NH4(+). Involved in pyrimidine catabolism. Catalyzes the deamination of 3-aminoacrylate to malonic semialdehyde, a reaction that can also occur spontaneously. RutC may facilitate the reaction and modulate the metabolic fitness, rather than catalyzing essential functions. In Shigella flexneri serotype X (strain 2002017), this protein is 3-aminoacrylate deaminase RutC.